Here is a 411-residue protein sequence, read N- to C-terminus: Putative glycosyltransferase SCO3672 (411 aa).

10 helical membrane passes run 7–27 (IAAA…LAAL), 45–65 (PVPL…AWAG), 70–90 (VVPL…VGAL), 120–140 (ETGP…TGAF), 148–168 (GVVG…AAVE), 169–189 (LMDG…GFLL), 197–217 (IALG…AAVL), 227–247 (GAGV…LVLL), 277–297 (GVVV…VLAH), and 301–321 (VGGQ…LGLL).

This sequence belongs to the glycosyltransferase 4 family.

The protein resides in the cell membrane. This Streptomyces coelicolor (strain ATCC BAA-471 / A3(2) / M145) protein is Putative glycosyltransferase SCO3672.